A 673-amino-acid chain; its full sequence is Bifunctional polymyxin resistance protein ArnA (673 aa).

The tract at residues 1-311 (MKAIVFAYHD…EMGMVPQARL (311 aa)) is formyltransferase ArnAFT. The active-site Proton donor; for formyltransferase activity is His-104. (6R)-10-formyltetrahydrofolate contacts are provided by residues Arg-114 and 136–140 (VSRAD). The interval 321–673 (RRTRVLILGV…HTADATDTQG (353 aa)) is dehydrogenase ArnADH. Residues Asp-354 and 375 to 376 (DI) contribute to the NAD(+) site. UDP-alpha-D-glucuronate-binding positions include Ala-400, Tyr-405, and 439–440 (TS). The active-site Proton acceptor; for decarboxylase activity is the Glu-441. UDP-alpha-D-glucuronate-binding positions include Arg-467, Asn-499, 533 to 542 (KLVDGGAQKR), and Tyr-620. Arg-626 serves as the catalytic Proton donor; for decarboxylase activity.

The protein in the N-terminal section; belongs to the Fmt family. UDP-L-Ara4N formyltransferase subfamily. In the C-terminal section; belongs to the NAD(P)-dependent epimerase/dehydratase family. UDP-glucuronic acid decarboxylase subfamily. In terms of assembly, homohexamer, formed by a dimer of trimers.

The catalysed reaction is UDP-alpha-D-glucuronate + NAD(+) = UDP-beta-L-threo-pentopyranos-4-ulose + CO2 + NADH. It catalyses the reaction UDP-4-amino-4-deoxy-beta-L-arabinose + (6R)-10-formyltetrahydrofolate = UDP-4-deoxy-4-formamido-beta-L-arabinose + (6S)-5,6,7,8-tetrahydrofolate + H(+). The protein operates within nucleotide-sugar biosynthesis; UDP-4-deoxy-4-formamido-beta-L-arabinose biosynthesis; UDP-4-deoxy-4-formamido-beta-L-arabinose from UDP-alpha-D-glucuronate: step 1/3. It participates in nucleotide-sugar biosynthesis; UDP-4-deoxy-4-formamido-beta-L-arabinose biosynthesis; UDP-4-deoxy-4-formamido-beta-L-arabinose from UDP-alpha-D-glucuronate: step 3/3. It functions in the pathway bacterial outer membrane biogenesis; lipopolysaccharide biosynthesis. Its function is as follows. Bifunctional enzyme that catalyzes the oxidative decarboxylation of UDP-glucuronic acid (UDP-GlcUA) to UDP-4-keto-arabinose (UDP-Ara4O) and the addition of a formyl group to UDP-4-amino-4-deoxy-L-arabinose (UDP-L-Ara4N) to form UDP-L-4-formamido-arabinose (UDP-L-Ara4FN). The modified arabinose is attached to lipid A and is required for resistance to polymyxin and cationic antimicrobial peptides. The sequence is that of Bifunctional polymyxin resistance protein ArnA from Pectobacterium atrosepticum (strain SCRI 1043 / ATCC BAA-672) (Erwinia carotovora subsp. atroseptica).